We begin with the raw amino-acid sequence, 163 residues long: uncharacterized protein (163 aa).

The helical transmembrane segment at 11-31 (LSWFLLLVVVILIFFLLLSCL) threads the bilayer.

It localises to the membrane. This is an uncharacterized protein from Saccharomyces cerevisiae (strain ATCC 204508 / S288c) (Baker's yeast).